The chain runs to 128 residues: Fluoride-specific ion channel FluC 2 (128 aa).

A run of 4 helical transmembrane segments spans residues 13-35 (ALVA…AIAG), 40-59 (LAAN…EAAA), 71-93 (LLGT…TAGL), and 97-119 (WMAA…GRAI).

This sequence belongs to the fluoride channel Fluc/FEX (TC 1.A.43) family.

The protein localises to the cell membrane. The enzyme catalyses fluoride(in) = fluoride(out). Its function is as follows. Fluoride-specific ion channel. Important for reducing fluoride concentration in the cell, thus reducing its toxicity. This is Fluoride-specific ion channel FluC 2 from Halobacterium salinarum (strain ATCC 700922 / JCM 11081 / NRC-1) (Halobacterium halobium).